We begin with the raw amino-acid sequence, 356 residues long: GDSL esterase/lipase At2g36325 (356 aa).

Residues 1-26 form the signal peptide; the sequence is MNITKLTPWFLFSCLILLSDYIKVNS. Residue Asn-25 is glycosylated (N-linked (GlcNAc...) asparagine). The Nucleophile role is filled by Ser-54. Residues Asn-165, Asn-185, and Asn-240 are each glycosylated (N-linked (GlcNAc...) asparagine). Catalysis depends on residues Asp-334 and His-337.

This sequence belongs to the 'GDSL' lipolytic enzyme family.

The protein resides in the secreted. The chain is GDSL esterase/lipase At2g36325 from Arabidopsis thaliana (Mouse-ear cress).